We begin with the raw amino-acid sequence, 64 residues long: Putative neurotoxin 5 (64 aa).

The signal sequence occupies residues 1-18 (MKNKFAALVITLFVLVLA).

It belongs to the scolopendra neurotoxin 6 family. Contains 3 disulfide bonds. In terms of tissue distribution, expressed by the venom gland.

Its subcellular location is the secreted. The polypeptide is Putative neurotoxin 5 (Scolopendra mutilans (Chinese red-headed centipede)).